We begin with the raw amino-acid sequence, 30 residues long: Photosystem I reaction center subunit XII (30 aa).

The helical transmembrane segment at 6-26 threads the bilayer; that stretch reads VFTILAIALVPAVMAALLGSA.

Belongs to the PsaM family.

The protein resides in the cellular thylakoid membrane. This is Photosystem I reaction center subunit XII from Synechococcus sp. (strain JA-3-3Ab) (Cyanobacteria bacterium Yellowstone A-Prime).